A 608-amino-acid polypeptide reads, in one-letter code: Centromere DNA-binding protein complex CBF3 subunit B (608 aa).

The segment at residues 14-42 (CSVCTRRKVKCDRMIPCGNCRKRGQDSEC) is a DNA-binding region (zn(2)-C6 fungal-type). Position 575 is a phosphoserine (Ser575).

Component of the CBF3 copmplex, which is formed of CBF3A/CBF2, CBF3B/CEP3, CBF3C/CTF13 and CBF3D.

Its subcellular location is the nucleus. It localises to the chromosome. The protein localises to the centromere. Functionally, acts as a component of the centromere DNA-binding protein complex CBF3, which is essential for chromosome segregation and movement of centromeres along microtubules. CBF3 is required for the recruitment of other kinetochore complexes to CEN DNA. It plays a role in the attachment of chromosomes to the spindle and binds selectively to a highly conserved DNA sequence called CDEIII, found in centromers and in several promoters. In Saccharomyces cerevisiae (strain ATCC 204508 / S288c) (Baker's yeast), this protein is Centromere DNA-binding protein complex CBF3 subunit B (CEP3).